Consider the following 312-residue polypeptide: Lichenase-2 (312 aa).

Residues 1-6 (PPSVES) form the signal peptide. Glutamate 99 (proton donor) is an active-site residue. Residue asparagine 196 is glycosylated (N-linked (GlcNAc...) asparagine). The active-site Nucleophile is the glutamate 238.

Belongs to the glycosyl hydrolase 17 family.

It carries out the reaction Hydrolysis of (1-&gt;4)-beta-D-glucosidic linkages in beta-D-glucans containing (1-&gt;3)- and (1-&gt;4)-bonds.. The protein operates within glycan metabolism; beta-D-glucan degradation. Functions in plant cell wall hydrolysis during mobilization of the endosperm in germinating grain or during the growth of vegetative tissues. This Hordeum vulgare (Barley) protein is Lichenase-2.